Here is a 402-residue protein sequence, read N- to C-terminus: MLSPEVRALVKATAPVLKEHGEALTRHFYTRMLGGNPELRQLFNQGHQQSGQQQQALAAAVAAYAEHIDDPSVLLQVVERIAHKHVSLGVRAEHYAIVGKHLLASIREVLGEAATDELIDAWAAAYGQLADLLIGRERALYAAAASRDGGWTGWRAFKVVRKTPESAEITSFYLAPADGGATPDYLPGQYVSVRVYVPELGLMQPRQYSLSEAPGMPGQLRISVKREAGSPAGMVSGTLHNRINEGDVLDVSPPQGDFTLDAEDGRPVVLLSGGVGLTPMVSMLNHLTARDDGRQIRFVHACREAGVHAMKEHINALAAKRPNVRKAVFYERVGADDRRGVDYDYEGRVDLHAIRDEVILPDADYYLCGPLPFMQAQRRALADLGVAEHRIHAEVFGTGGVA.

Positions M1–R138 constitute a Globin domain. H85 contributes to the heme b binding site. Residues Y95 and E137 each act as charge relay system in the active site. Residues G149–A402 are reductase. The FAD-binding FR-type domain occupies T152–D261. FAD-binding positions include Y190 and R206 to S209. G274–P279 contacts NADP(+). V395–T398 serves as a coordination point for FAD.

This sequence belongs to the globin family. Two-domain flavohemoproteins subfamily. The protein in the C-terminal section; belongs to the flavoprotein pyridine nucleotide cytochrome reductase family. Heme b is required as a cofactor. FAD serves as cofactor.

It carries out the reaction 2 nitric oxide + NADPH + 2 O2 = 2 nitrate + NADP(+) + H(+). The enzyme catalyses 2 nitric oxide + NADH + 2 O2 = 2 nitrate + NAD(+) + H(+). In terms of biological role, is involved in NO detoxification in an aerobic process, termed nitric oxide dioxygenase (NOD) reaction that utilizes O(2) and NAD(P)H to convert NO to nitrate, which protects the bacterium from various noxious nitrogen compounds. Therefore, plays a central role in the inducible response to nitrosative stress. The polypeptide is Flavohemoprotein (Bordetella pertussis (strain Tohama I / ATCC BAA-589 / NCTC 13251)).